We begin with the raw amino-acid sequence, 276 residues long: Putative pyruvate, phosphate dikinase regulatory protein (276 aa).

Residue 150–157 (GVSRTSKT) coordinates ADP.

The protein belongs to the pyruvate, phosphate/water dikinase regulatory protein family. PDRP subfamily.

It catalyses the reaction N(tele)-phospho-L-histidyl/L-threonyl-[pyruvate, phosphate dikinase] + ADP = N(tele)-phospho-L-histidyl/O-phospho-L-threonyl-[pyruvate, phosphate dikinase] + AMP + H(+). The enzyme catalyses N(tele)-phospho-L-histidyl/O-phospho-L-threonyl-[pyruvate, phosphate dikinase] + phosphate + H(+) = N(tele)-phospho-L-histidyl/L-threonyl-[pyruvate, phosphate dikinase] + diphosphate. Bifunctional serine/threonine kinase and phosphorylase involved in the regulation of the pyruvate, phosphate dikinase (PPDK) by catalyzing its phosphorylation/dephosphorylation. The polypeptide is Putative pyruvate, phosphate dikinase regulatory protein (Lacticaseibacillus casei (strain BL23) (Lactobacillus casei)).